Reading from the N-terminus, the 152-residue chain is Xanthine-guanine phosphoribosyltransferase (152 aa).

5-phospho-alpha-D-ribose 1-diphosphate is bound by residues 37–38 (RG), arginine 69, and 88–96 (DDLVDTGGT). Arginine 69 is a GMP binding site. A Mg(2+)-binding site is contributed by aspartate 89. The guanine site is built by aspartate 92 and isoleucine 135. Residues aspartate 92 and isoleucine 135 each coordinate xanthine. Residues 92-96 (DTGGT) and 134-135 (WI) contribute to the GMP site.

Belongs to the purine/pyrimidine phosphoribosyltransferase family. XGPT subfamily. In terms of assembly, homotetramer. It depends on Mg(2+) as a cofactor.

The protein localises to the cell inner membrane. It carries out the reaction GMP + diphosphate = guanine + 5-phospho-alpha-D-ribose 1-diphosphate. The catalysed reaction is XMP + diphosphate = xanthine + 5-phospho-alpha-D-ribose 1-diphosphate. It catalyses the reaction IMP + diphosphate = hypoxanthine + 5-phospho-alpha-D-ribose 1-diphosphate. The protein operates within purine metabolism; GMP biosynthesis via salvage pathway; GMP from guanine: step 1/1. Its pathway is purine metabolism; XMP biosynthesis via salvage pathway; XMP from xanthine: step 1/1. Functionally, purine salvage pathway enzyme that catalyzes the transfer of the ribosyl-5-phosphate group from 5-phospho-alpha-D-ribose 1-diphosphate (PRPP) to the N9 position of the 6-oxopurines guanine and xanthine to form the corresponding ribonucleotides GMP (guanosine 5'-monophosphate) and XMP (xanthosine 5'-monophosphate), with the release of PPi. To a lesser extent, also acts on hypoxanthine. The polypeptide is Xanthine-guanine phosphoribosyltransferase (Edwardsiella ictaluri (strain 93-146)).